We begin with the raw amino-acid sequence, 127 residues long: Small ribosomal subunit protein uS11 (127 aa).

Belongs to the universal ribosomal protein uS11 family. As to quaternary structure, part of the 30S ribosomal subunit. Interacts with proteins S7 and S18. Binds to IF-3.

In terms of biological role, located on the platform of the 30S subunit, it bridges several disparate RNA helices of the 16S rRNA. Forms part of the Shine-Dalgarno cleft in the 70S ribosome. The chain is Small ribosomal subunit protein uS11 from Rhodopirellula baltica (strain DSM 10527 / NCIMB 13988 / SH1).